Here is a 199-residue protein sequence, read N- to C-terminus: Transgelin-3 (199 aa).

The Calponin-homology (CH) domain maps to 24 to 136 (ADLENKLVDW…RTLMALGSVA (113 aa)). The residue at position 163 (S163) is a Phosphoserine. The stretch at 174-199 (IGLQMGSNKGASQAGMTGYGMPRQIM) is one Calponin-like repeat. A compositionally biased stretch (polar residues) spans 178 to 188 (MGSNKGASQAG). A disordered region spans residues 178–199 (MGSNKGASQAGMTGYGMPRQIM).

The protein belongs to the calponin family.

The protein is Transgelin-3 (Tagln3) of Mus musculus (Mouse).